The following is an 88-amino-acid chain: ATP synthase F(0) complex subunit f, mitochondrial (88 aa).

Alanine 2 is subject to N-acetylalanine. Serine 3 is modified (phosphoserine). At lysine 16 the chain carries N6-acetyllysine. Residues 62–79 traverse the membrane as a helical segment; it reads MVLAAYVFLNYCRSYKEL.

As to quaternary structure, component of the ATP synthase complex composed at least of ATP5F1A/subunit alpha, ATP5F1B/subunit beta, ATP5MC1/subunit c (homooctomer), MT-ATP6/subunit a, MT-ATP8/subunit 8, ATP5ME/subunit e, ATP5MF/subunit f, ATP5MG/subunit g, ATP5MK/subunit k, ATP5MJ/subunit j, ATP5F1C/subunit gamma, ATP5F1D/subunit delta, ATP5F1E/subunit epsilon, ATP5PF/subunit F6, ATP5PB/subunit b, ATP5PD/subunit d, ATP5PO/subunit OSCP. ATP synthase complex consists of a soluble F(1) head domain (subunits alpha(3) and beta(3)) - the catalytic core - and a membrane F(0) domain - the membrane proton channel (subunits c, a, 8, e, f, g, k and j). These two domains are linked by a central stalk (subunits gamma, delta, and epsilon) rotating inside the F1 region and a stationary peripheral stalk (subunits F6, b, d, and OSCP).

It is found in the mitochondrion. It localises to the mitochondrion inner membrane. Its function is as follows. Subunit f, of the mitochondrial membrane ATP synthase complex (F(1)F(0) ATP synthase or Complex V) that produces ATP from ADP in the presence of a proton gradient across the membrane which is generated by electron transport complexes of the respiratory chain. ATP synthase complex consist of a soluble F(1) head domain - the catalytic core - and a membrane F(1) domain - the membrane proton channel. These two domains are linked by a central stalk rotating inside the F(1) region and a stationary peripheral stalk. During catalysis, ATP synthesis in the catalytic domain of F(1) is coupled via a rotary mechanism of the central stalk subunits to proton translocation. In vivo, can only synthesize ATP although its ATP hydrolase activity can be activated artificially in vitro. Part of the complex F(0) domain. The chain is ATP synthase F(0) complex subunit f, mitochondrial from Bos taurus (Bovine).